A 102-amino-acid chain; its full sequence is Alpha-ketoglutarate dehydrogenase component 4 (102 aa).

Residue glycine 2 is modified to N-acetylglycine. Lysine 4 bears the N6-succinyllysine mark. The segment at 23–70 is disordered; it reads KFPNRRDKPKLSASEALGSAALPSHSSAISQHSKGSTSPDLLMHQGPP. Residues 33–46 are compositionally biased toward low complexity; it reads LSASEALGSAALPS. A compositionally biased stretch (polar residues) spans 47-61; the sequence is HSSAISQHSKGSTSP. A phosphoserine mark is found at serine 48, serine 60, and serine 89.

The protein belongs to the alpha-ketoglutarate dehydrogenase component 4 family. Component of the 2-oxoglutarate dehydrogenase complex (OGDHC), composed of OGDH (2-oxoglutarate dehydrogenase; also called E1 subunit), DLST (dihydrolipoamide succinyltransferase; also called E2 subunit) and DLD (dihydrolipoamide dehydrogenase; also called E3 subunit), and the assembly factor KGD4. Within OGDHC complex, interacts (via N-terminus) with E3 subunit and (via C-terminus) with E2 subunit.

It localises to the mitochondrion. In terms of biological role, molecular adapter that is necessary to form a stable 2-oxoglutarate dehydrogenase enzyme complex (OGDHC). Enables the specific recruitment of E3 subunit to E2 subunit in the 2-oxoglutarate dehydrogenase complex (OGDHC). In Mus musculus (Mouse), this protein is Alpha-ketoglutarate dehydrogenase component 4.